The following is a 329-amino-acid chain: UDP-2,3-diacylglucosamine pyrophosphatase LpxG (329 aa).

The chain crosses the membrane as a helical span at residues Phe-2–Trp-24. 6 residues coordinate a divalent metal cation: Asp-59, His-61, Asp-91, Asn-123, His-257, and His-259.

Belongs to the metallophosphoesterase superfamily. It depends on Mn(2+) as a cofactor.

It localises to the cell inner membrane. It carries out the reaction UDP-2,3-diacyl-alpha-D-glucosamine + H2O = 2,3-diacyl-alpha-D-glucosaminyl 1-phosphate + UMP + 2 H(+). It functions in the pathway glycolipid biosynthesis; lipid IV(A) biosynthesis. In terms of biological role, hydrolyzes the pyrophosphate bond of UDP-2,3-diacylglucosamine to form 2,3-diacylglucosamine 1-phosphate (lipid X) and UMP by catalyzing the attack of water at the alpha-P atom. Involved in the biosynthesis of lipid A, a phosphorylated glycolipid that anchors the lipooligosaccharide (LOS) to the outer membrane of the cell. The sequence is that of UDP-2,3-diacylglucosamine pyrophosphatase LpxG from Chlamydia muridarum (strain MoPn / Nigg).